The sequence spans 221 residues: Very-long-chain (3R)-3-hydroxyacyl-CoA dehydratase PASTICCINO 2 (221 aa).

Residues methionine 1 to valine 11 lie on the Cytoplasmic side of the membrane. A helical transmembrane segment spans residues tyrosine 12 to isoleucine 32. Residues threonine 33 to leucine 51 are Lumenal-facing. The helical transmembrane segment at glutamine 52 to valine 70 threads the bilayer. Topologically, residues arginine 71–alanine 76 are cytoplasmic. Residues threonine 77–phenylalanine 95 form a helical membrane-spanning segment. Over proline 96 to serine 100 the chain is Lumenal. A helical membrane pass occupies residues histidine 101–phenylalanine 122. At glycine 123 to serine 142 the chain is on the cytoplasmic side. A helical transmembrane segment spans residues phenylalanine 143–isoleucine 165. Active-site residues include tyrosine 147 and glutamate 154. Residues lysine 166–aspartate 184 are Lumenal-facing. Residues phenylalanine 185–tyrosine 204 form a helical membrane-spanning segment. Topologically, residues arginine 205–glutamate 221 are cytoplasmic.

The protein belongs to the very long-chain fatty acids dehydratase HACD family. As to quaternary structure, interacts with CDKA-1; but only with the 'Tyr-15' phosphorylated protein. Interacts with PAS1. Part of the fatty acid elongase complex which contains a beta-ketoacyl-CoA synthase (KCS), a beta-ketoacyl-CoA reductase (KCR), a beta-hydroxyacyl-CoA dehydratase (HCD) and an enoyl-CoA reductase (ECR). As to expression, high expression in young seedlings, roots, root tips, flowers and young siliques. Lower levels in leaves and stems.

The protein resides in the endoplasmic reticulum membrane. Its subcellular location is the cytoplasm. The protein localises to the nucleus. It carries out the reaction a very-long-chain (3R)-3-hydroxyacyl-CoA = a very-long-chain (2E)-enoyl-CoA + H2O. Its pathway is lipid metabolism; fatty acid biosynthesis. Catalyzes the third of the four reactions of the long-chain fatty acids elongation cycle. This endoplasmic reticulum-bound enzymatic process, allows the addition of two carbons to the chain of long- and very long-chain fatty acids/VLCFAs per cycle. This enzyme catalyzes the dehydration of the 3-hydroxyacyl-CoA intermediate into trans-2,3-enoyl-CoA, within each cycle of fatty acid elongation. Thereby, it participates in the production of VLCFAs of different chain lengths that are involved in multiple biological processes as precursors of membrane lipids and lipid mediators. May be an anti-phosphatase that prevents CDKA-1 dephosphorylation and activation. Involved in the hormonal control of cell division and differentiation. Required for proliferation control of meristematic and non-meristematic cells. Negative regulator of the cell cycle. The protein is Very-long-chain (3R)-3-hydroxyacyl-CoA dehydratase PASTICCINO 2 (PAS2) of Arabidopsis thaliana (Mouse-ear cress).